Consider the following 72-residue polypeptide: Putative sodium channel toxin Ts18 (72 aa).

An N-terminal signal peptide occupies residues 1–21 (MNFRFPFLLMITISLIGAVLT). 3 disulfide bridges follow: C38-C61, C47-C66, and C51-C68.

Belongs to the long (3 C-C) scorpion toxin superfamily. As to expression, expressed by the venom gland.

Its subcellular location is the secreted. Its function is as follows. Binds to sodium channels (Nav) and affects the channel activation process. The polypeptide is Putative sodium channel toxin Ts18 (Tityus serrulatus (Brazilian scorpion)).